The chain runs to 155 residues: Ribosome maturation factor RimP (155 aa).

Belongs to the RimP family.

The protein localises to the cytoplasm. Its function is as follows. Required for maturation of 30S ribosomal subunits. The polypeptide is Ribosome maturation factor RimP (Listeria monocytogenes serovar 1/2a (strain ATCC BAA-679 / EGD-e)).